The primary structure comprises 348 residues: tRNA pseudouridine synthase D (348 aa).

Phenylalanine 27 contributes to the substrate binding site. Aspartate 80 serves as the catalytic Nucleophile. Asparagine 129 is a substrate binding site. The TRUD domain maps to 155–303 (GVPNYFGSQR…VESARRAVLL (149 aa)). Phenylalanine 329 is a substrate binding site.

The protein belongs to the pseudouridine synthase TruD family.

It carries out the reaction uridine(13) in tRNA = pseudouridine(13) in tRNA. In terms of biological role, responsible for synthesis of pseudouridine from uracil-13 in transfer RNAs. The polypeptide is tRNA pseudouridine synthase D (Pectobacterium carotovorum subsp. carotovorum (strain PC1)).